The primary structure comprises 231 residues: Ion-translocating oxidoreductase complex subunit E (231 aa).

A run of 6 helical transmembrane segments spans residues 18 to 38, 39 to 59, 63 to 83, 86 to 106, 125 to 145, and 182 to 202; these read ALVQLLGLCPLLAVTSTATNA, LGLGLATTLVLTLTNLTISTL, TPSEIRIPIYVMIIASVVSAV, LINAYAFGLYQSLGIFIPLIV, ALSALDGFSIGMGATCAMFVL, and PFLLAMLPPGAFIGLGLMLAG.

It belongs to the NqrDE/RnfAE family. In terms of assembly, the complex is composed of six subunits: RsxA, RsxB, RsxC, RsxD, RsxE and RsxG.

It localises to the cell inner membrane. In terms of biological role, part of a membrane-bound complex that couples electron transfer with translocation of ions across the membrane. Required to maintain the reduced state of SoxR. The chain is Ion-translocating oxidoreductase complex subunit E from Escherichia coli O6:K15:H31 (strain 536 / UPEC).